Reading from the N-terminus, the 195-residue chain is Achaete-scute homolog 1b (195 aa).

The bHLH domain maps to 66–118 (MAVARRNERERNRVKQVNMGFQTLRQHVPNGAANKKMSKVETLRSAVEYIRAL). The interval 141–164 (VSNAYSAGPESPHSAYSSDEGSYE) is disordered.

Efficient DNA binding requires dimerization with another bHLH protein. In terms of tissue distribution, in the 24 hours embryo, expressed in hindbrain close to the anterior and posterior boundaries of rhombomeres 2-6 and in ventral cells close to the floor plate of most rhombomeres. Also expressed in the telencephalon, diencephalon, tegmentum and spinal cord at sites distinct from those expressing ascl1a. Not expressed in the adenohypophysis.

The protein localises to the nucleus. Functionally, transcriptional regulator. May mediate transcription activation by binding to the E box-containing promoter. Involved in neurogenesis. Involved in maintaining rhombomere boundaries in the hindbrain, probably via up-regulation of delta expression. May mediate transcription activation by binding to the E box-containing promoter. The polypeptide is Achaete-scute homolog 1b (Danio rerio (Zebrafish)).